A 656-amino-acid chain; its full sequence is Pheromone-processing carboxypeptidase KEX1 (656 aa).

A signal peptide spans 1-17 (MFFHAILVLIQVALALG). Topologically, residues 18-536 (ASPRAGSSER…DNNTSHKIER (519 aa)) are lumenal. N-linked (GlcNAc...) asparagine glycosylation is found at N61 and N118. Active-site residues include S180 and D388. 2 N-linked (GlcNAc...) asparagine glycosylation sites follow: N434 and N442. The active site involves H445. The chain crosses the membrane as a helical span at residues 537-557 (AIQLLVIIVLLWGIYALYSSY). The Cytoplasmic segment spans residues 558 to 656 (KSRPSSIIKS…SRNEPSSNQK (99 aa)). Positions 626-656 (MSSASPIDDFVVVSDDEEEEPSRNEPSSNQK) are disordered.

The protein belongs to the peptidase S10 family.

The protein localises to the golgi apparatus. The protein resides in the trans-Golgi network membrane. It catalyses the reaction Preferential release of a C-terminal arginine or lysine residue.. Its function is as follows. Protease with a carboxypeptidase B-like function involved in the C-terminal processing of the lysine and arginine residues from protein precursors. Promotes cell fusion and is involved in the programmed cell death. The chain is Pheromone-processing carboxypeptidase KEX1 (KEX1) from Meyerozyma guilliermondii (strain ATCC 6260 / CBS 566 / DSM 6381 / JCM 1539 / NBRC 10279 / NRRL Y-324) (Yeast).